We begin with the raw amino-acid sequence, 571 residues long: Proline--tRNA ligase (571 aa).

The protein belongs to the class-II aminoacyl-tRNA synthetase family. ProS type 1 subfamily. In terms of assembly, homodimer.

Its subcellular location is the cytoplasm. It catalyses the reaction tRNA(Pro) + L-proline + ATP = L-prolyl-tRNA(Pro) + AMP + diphosphate. Catalyzes the attachment of proline to tRNA(Pro) in a two-step reaction: proline is first activated by ATP to form Pro-AMP and then transferred to the acceptor end of tRNA(Pro). As ProRS can inadvertently accommodate and process non-cognate amino acids such as alanine and cysteine, to avoid such errors it has two additional distinct editing activities against alanine. One activity is designated as 'pretransfer' editing and involves the tRNA(Pro)-independent hydrolysis of activated Ala-AMP. The other activity is designated 'posttransfer' editing and involves deacylation of mischarged Ala-tRNA(Pro). The misacylated Cys-tRNA(Pro) is not edited by ProRS. This is Proline--tRNA ligase from Pseudomonas putida (strain W619).